A 247-amino-acid chain; its full sequence is Chloride intracellular channel protein 2 (247 aa).

The tract at residues 1-94 is N-terminal; the sequence is MSGLRPGTQV…KIEEFLEQTL (94 aa). A required for insertion into the membrane region spans residues 1 to 96; it reads MSGLRPGTQV…EEFLEQTLAP (96 aa). A glutathione-binding site is contributed by Glu25. Positions 30–33 match the G-site motif; it reads CPFC. Cys30 and Cys33 are oxidised to a cystine. A helical transmembrane segment spans residues 32 to 52; sequence FCQRLFMILWLKGVKFNVTTV. The GST C-terminal domain occupies 76 to 239; sequence NKELKTDFIK…PEDKEIENTY (164 aa). The interval 95–106 is joint loop; that stretch reads APPRYPHLSPKY. Residues 107–247 form a C-terminal region; sequence KESFDVGCNL…TYANVAKQKS (141 aa). The foot loop stretch occupies residues 151 to 171; that stretch reads NTPLLDEIDPDSAEEPPVSRR. His227 lines the glutathione pocket.

This sequence belongs to the chloride channel CLIC family. As to quaternary structure, monomer. Interacts with TRAPPC2 and RYR2. Expressed in adult and fetal brain, heart, skeletal muscle, liver, lung, and spleen. Detected in adult stomach and testis. Expressed in fetal thymus and kidney.

It localises to the cytoplasm. The protein resides in the membrane. The enzyme catalyses chloride(in) = chloride(out). It catalyses the reaction tert-butyl hydroperoxide + 2 glutathione = tert-butanol + glutathione disulfide + H2O. It carries out the reaction cumene hydroperoxide + 2 glutathione = 2-phenylpropan-2-ol + glutathione disulfide + H2O. Its activity is regulated as follows. The channel conductance is regulated by pH. In the soluble state, catalyzes glutaredoxin-like thiol disulfide exchange reactions with reduced glutathione as electron donor. Displays weak glutathione peroxidase activity. Can insert into membranes and form chloride ion channels. Membrane insertion seems to be redox-regulated and may occur only under oxidizing conditions. Modulates the activity of RYR2 and inhibits calcium influx. This chain is Chloride intracellular channel protein 2, found in Homo sapiens (Human).